Here is a 391-residue protein sequence, read N- to C-terminus: Elongation factor Tu (391 aa).

The tr-type G domain occupies 10 to 201 (KPHVNIGTIG…AVDEYIPTPA (192 aa)). A G1 region spans residues 19–26 (GHVDHGKT). Position 19–26 (19–26 (GHVDHGKT)) interacts with GTP. T26 contacts Mg(2+). Positions 55–59 (GITIS) are G2. The interval 76-79 (DCPG) is G3. GTP contacts are provided by residues 76–80 (DCPGH) and 131–134 (NKVD). Positions 131–134 (NKVD) are G4. A G5 region spans residues 169–171 (SAL).

It belongs to the TRAFAC class translation factor GTPase superfamily. Classic translation factor GTPase family. EF-Tu/EF-1A subfamily. Monomer.

The protein resides in the cytoplasm. The enzyme catalyses GTP + H2O = GDP + phosphate + H(+). GTP hydrolase that promotes the GTP-dependent binding of aminoacyl-tRNA to the A-site of ribosomes during protein biosynthesis. In Ruegeria pomeroyi (strain ATCC 700808 / DSM 15171 / DSS-3) (Silicibacter pomeroyi), this protein is Elongation factor Tu.